The chain runs to 546 residues: Cholesterol oxidase (546 aa).

The segment at residues 1–42 (MTAQQHLSRRRMLGMAAFGAAALAGGTTIAAPRAAAAAKSAA) is a signal peptide (tat-type signal). The FAD site is built by Y57, G58, E77, G152, N156, G157, M159, and V287. Catalysis depends on proton acceptor residues E398 and H484. The FAD site is built by G512 and F524.

This sequence belongs to the GMC oxidoreductase family. In terms of assembly, monomer. The cofactor is FAD. Predicted to be exported by the Tat system. The position of the signal peptide cleavage has been experimentally proven.

Its subcellular location is the secreted. The catalysed reaction is cholesterol + O2 = cholest-5-en-3-one + H2O2. It carries out the reaction cholest-5-en-3-one = cholest-4-en-3-one. It functions in the pathway steroid metabolism; cholesterol degradation. In terms of biological role, bifunctional enzyme that catalyzes the oxidation and isomerization of cholesterol to cholestenone (cholest-4-en-3-one), an initial step in the cholesterol degradation process. The cholesterol degradation pathway allows the bacterium to utilize cholesterol as its sole source of carbon and energy. The sequence is that of Cholesterol oxidase from Streptomyces sp. (strain SA-COO).